The chain runs to 607 residues: Lipid-A-disaccharide synthase (607 aa).

The segment at 1–224 (MFPQKITLWL…ASREAFRKPF (224 aa)) is unknown. Residues 225-607 (SNSCFISAGE…CLSLIFETAS (383 aa)) are lipid-A-disaccharide synthase.

This sequence in the C-terminal section; belongs to the LpxB family.

The enzyme catalyses a lipid X + a UDP-2-N,3-O-bis[(3R)-3-hydroxyacyl]-alpha-D-glucosamine = a lipid A disaccharide + UDP + H(+). It participates in bacterial outer membrane biogenesis; LPS lipid A biosynthesis. Its function is as follows. Condensation of UDP-2,3-diacylglucosamine and 2,3-diacylglucosamine-1-phosphate to form lipid A disaccharide, a precursor of lipid A, a phosphorylated glycolipid that anchors the lipopolysaccharide to the outer membrane of the cell. The chain is Lipid-A-disaccharide synthase (lpxB) from Chlamydia trachomatis serovar A (strain ATCC VR-571B / DSM 19440 / HAR-13).